A 349-amino-acid polypeptide reads, in one-letter code: Protein-glutamate methylesterase/protein-glutamine glutaminase (349 aa).

One can recognise a Response regulatory domain in the interval 2–118 (RVLVVDDSAL…VDLSSVAQEL (117 aa)). Asp-52 carries the 4-aspartylphosphate modification. A CheB-type methylesterase domain is found at 159 to 345 (VLIGSSTGGP…EEIVRFLEVK (187 aa)). Active-site residues include Ser-164, His-191, and Asp-287.

It belongs to the CheB family. Post-translationally, phosphorylated by CheA. Phosphorylation of the N-terminal regulatory domain activates the methylesterase activity.

Its subcellular location is the cytoplasm. It carries out the reaction [protein]-L-glutamate 5-O-methyl ester + H2O = L-glutamyl-[protein] + methanol + H(+). It catalyses the reaction L-glutaminyl-[protein] + H2O = L-glutamyl-[protein] + NH4(+). Functionally, involved in chemotaxis. Part of a chemotaxis signal transduction system that modulates chemotaxis in response to various stimuli. Catalyzes the demethylation of specific methylglutamate residues introduced into the chemoreceptors (methyl-accepting chemotaxis proteins or MCP) by CheR. Also mediates the irreversible deamidation of specific glutamine residues to glutamic acid. The chain is Protein-glutamate methylesterase/protein-glutamine glutaminase from Archaeoglobus fulgidus (strain ATCC 49558 / DSM 4304 / JCM 9628 / NBRC 100126 / VC-16).